The sequence spans 201 residues: ATP synthase subunit delta, chloroplastic (201 aa).

The protein belongs to the ATPase delta chain family. F-type ATPases have 2 components, F(1) - the catalytic core - and F(0) - the membrane proton channel. F(1) has five subunits: alpha(3), beta(3), gamma(1), delta(1), epsilon(1). CF(0) has four main subunits: a(1), b(1), b'(1) and c(10-14). The alpha and beta chains form an alternating ring which encloses part of the gamma chain. F(1) is attached to F(0) by a central stalk formed by the gamma and epsilon chains, while a peripheral stalk is formed by the delta, b and b' chains.

It localises to the plastid. The protein localises to the chloroplast thylakoid membrane. Its function is as follows. F(1)F(0) ATP synthase produces ATP from ADP in the presence of a proton or sodium gradient. F-type ATPases consist of two structural domains, F(1) containing the extramembraneous catalytic core and F(0) containing the membrane proton channel, linked together by a central stalk and a peripheral stalk. During catalysis, ATP synthesis in the catalytic domain of F(1) is coupled via a rotary mechanism of the central stalk subunits to proton translocation. This protein is part of the stalk that links CF(0) to CF(1). It either transmits conformational changes from CF(0) to CF(1) or is implicated in proton conduction. This chain is ATP synthase subunit delta, chloroplastic, found in Vaucheria litorea (Yellow-green alga).